Reading from the N-terminus, the 450-residue chain is Thiamine biosynthesis regulatory protein (450 aa).

The span at 1-12 shows a compositional bias: basic residues; it reads MVNSKRQQRSKK. The disordered stretch occupies residues 1–23; it reads MVNSKRQQRSKKVASSSKVPPTK. Low complexity predominate over residues 13-23; it reads VASSSKVPPTK. Residues 30 to 57 constitute a DNA-binding region (zn(2)-C6 fungal-type); the sequence is CWACRFKKRRCDENRPICSLCAKHGDNC. The tract at residues 210 to 234 is disordered; the sequence is TDQLPSPGHSMSSAEETTTAALSSP.

The protein resides in the nucleus. Positive regulator of thiamine biosynthesis. The sequence is that of Thiamine biosynthesis regulatory protein (THI2) from Saccharomyces cerevisiae (strain ATCC 204508 / S288c) (Baker's yeast).